A 256-amino-acid chain; its full sequence is Pimeloyl-[acyl-carrier protein] methyl ester esterase (256 aa).

Residues 15 to 242 (HLVLLHGWGL…AAHAPFISHP (228 aa)) form the AB hydrolase-1 domain. Substrate-binding positions include Trp-22, 82–83 (SL), and 143–147 (FLALQ). The Nucleophile role is filled by Ser-82. Residues Asp-207 and His-235 contribute to the active site. Substrate is bound at residue His-235.

It belongs to the AB hydrolase superfamily. Carboxylesterase BioH family. In terms of assembly, monomer.

Its subcellular location is the cytoplasm. It catalyses the reaction 6-carboxyhexanoyl-[ACP] methyl ester + H2O = 6-carboxyhexanoyl-[ACP] + methanol + H(+). It functions in the pathway cofactor biosynthesis; biotin biosynthesis. Its function is as follows. The physiological role of BioH is to remove the methyl group introduced by BioC when the pimeloyl moiety is complete. It allows to synthesize pimeloyl-ACP via the fatty acid synthetic pathway through the hydrolysis of the ester bonds of pimeloyl-ACP esters. This is Pimeloyl-[acyl-carrier protein] methyl ester esterase from Salmonella newport (strain SL254).